The primary structure comprises 100 residues: NADH-quinone oxidoreductase subunit K (100 aa).

A run of 3 helical transmembrane segments spans residues Thr4 to Ser24, Leu28 to Ala48, and Ile60 to Val80.

It belongs to the complex I subunit 4L family. In terms of assembly, NDH-1 is composed of 13 different subunits. Subunits NuoA, H, J, K, L, M, N constitute the membrane sector of the complex.

It is found in the cell inner membrane. It catalyses the reaction a quinone + NADH + 5 H(+)(in) = a quinol + NAD(+) + 4 H(+)(out). NDH-1 shuttles electrons from NADH, via FMN and iron-sulfur (Fe-S) centers, to quinones in the respiratory chain. The immediate electron acceptor for the enzyme in this species is believed to be ubiquinone. Couples the redox reaction to proton translocation (for every two electrons transferred, four hydrogen ions are translocated across the cytoplasmic membrane), and thus conserves the redox energy in a proton gradient. This chain is NADH-quinone oxidoreductase subunit K, found in Shewanella woodyi (strain ATCC 51908 / MS32).